The primary structure comprises 432 residues: Asparagine--tRNA ligase (432 aa).

This sequence belongs to the class-II aminoacyl-tRNA synthetase family. In terms of assembly, homodimer.

The protein resides in the cytoplasm. The enzyme catalyses tRNA(Asn) + L-asparagine + ATP = L-asparaginyl-tRNA(Asn) + AMP + diphosphate + H(+). This chain is Asparagine--tRNA ligase, found in Lactobacillus delbrueckii subsp. bulgaricus (strain ATCC 11842 / DSM 20081 / BCRC 10696 / JCM 1002 / NBRC 13953 / NCIMB 11778 / NCTC 12712 / WDCM 00102 / Lb 14).